The sequence spans 347 residues: Dihydroorotase (347 aa).

Residues H14 and H16 each contribute to the Zn(2+) site. Substrate-binding positions include 16 to 18 and N42; that span reads HLR. Residues K100, H137, and H175 each coordinate Zn(2+). K100 bears the N6-carboxylysine mark. H137 serves as a coordination point for substrate. L220 lines the substrate pocket. D248 contributes to the Zn(2+) binding site. Residue D248 is part of the active site. Positions 252 and 264 each coordinate substrate.

It belongs to the metallo-dependent hydrolases superfamily. DHOase family. Class II DHOase subfamily. As to quaternary structure, homodimer. Zn(2+) is required as a cofactor.

It carries out the reaction (S)-dihydroorotate + H2O = N-carbamoyl-L-aspartate + H(+). Its pathway is pyrimidine metabolism; UMP biosynthesis via de novo pathway; (S)-dihydroorotate from bicarbonate: step 3/3. Functionally, catalyzes the reversible cyclization of carbamoyl aspartate to dihydroorotate. The sequence is that of Dihydroorotase from Stutzerimonas stutzeri (strain A1501) (Pseudomonas stutzeri).